The following is a 324-amino-acid chain: MFLLFLLFVVSQVGLLVFSPKFKDLILFRWYYQHIYYPLFTDYTRYRWKYWLVPGFYACILIFCVHLFYNKLNDTVNPYLYSLEKAFIPITIAFTSLTGVASVFVKPLGLQAGPQFQPDYIIFHPSAVCQTCKTIKVPRSKHCPICERCIPLHDHHCIWINNCVGYGNYEYFYSFLLSNCLLLTYASLRLLTLFRITAFKKDKFFLSLFLLTTAFSLIAIVFTYYQLKLVNDGMTNNEQDKWYLVQEYMRNGNLVKDMDGVLYYRSMSTDAQTAEPIFYSTNLYDHSKYHLINPAKILSHEEIINLYDRGSFLDNLKERIHLLD.

Met-1 is a topological domain (lumenal). The helical transmembrane segment at 2–22 (FLLFLLFVVSQVGLLVFSPKF) threads the bilayer. Topologically, residues 23–49 (KDLILFRWYYQHIYYPLFTDYTRYRWK) are cytoplasmic. A helical transmembrane segment spans residues 50–70 (YWLVPGFYACILIFCVHLFYN). Residues 71 to 84 (KLNDTVNPYLYSLE) are Lumenal-facing. A helical transmembrane segment spans residues 85–105 (KAFIPITIAFTSLTGVASVFV). Residues 106–173 (KPLGLQAGPQ…VGYGNYEYFY (68 aa)) lie on the Cytoplasmic side of the membrane. A DHHC domain is found at 127 to 177 (AVCQTCKTIKVPRSKHCPICERCIPLHDHHCIWINNCVGYGNYEYFYSFLL). A helical transmembrane segment spans residues 174 to 194 (SFLLSNCLLLTYASLRLLTLF). The Lumenal segment spans residues 195–203 (RITAFKKDK). A helical membrane pass occupies residues 204–224 (FFLSLFLLTTAFSLIAIVFTY). Residues 225–324 (YQLKLVNDGM…NLKERIHLLD (100 aa)) are Cytoplasmic-facing.

It belongs to the DHHC palmitoyltransferase family. SWF1 subfamily.

The protein resides in the endoplasmic reticulum membrane. It catalyses the reaction L-cysteinyl-[protein] + hexadecanoyl-CoA = S-hexadecanoyl-L-cysteinyl-[protein] + CoA. Palmitoyltransferase that targets several endosomal SNAREs. Palmitoylates the SNAREs at cysteine residues close to the cytoplasmic end of their transmembrane domain. May have a role in the cellular quality control of transmembrane domain-containing proteins. In Kluyveromyces lactis (strain ATCC 8585 / CBS 2359 / DSM 70799 / NBRC 1267 / NRRL Y-1140 / WM37) (Yeast), this protein is Palmitoyltransferase SWF1 (SWF1).